The sequence spans 165 residues: Phosphopantetheine adenylyltransferase (165 aa).

Threonine 11 provides a ligand contact to substrate. ATP is bound by residues 11 to 12 (TF) and histidine 19. Substrate-binding residues include lysine 43, valine 75, and arginine 89. ATP is bound by residues 90 to 92 (GLR), glutamate 100, and 125 to 131 (YQFISST).

The protein belongs to the bacterial CoaD family. Homohexamer. It depends on Mg(2+) as a cofactor.

It localises to the cytoplasm. The catalysed reaction is (R)-4'-phosphopantetheine + ATP + H(+) = 3'-dephospho-CoA + diphosphate. It participates in cofactor biosynthesis; coenzyme A biosynthesis; CoA from (R)-pantothenate: step 4/5. In terms of biological role, reversibly transfers an adenylyl group from ATP to 4'-phosphopantetheine, yielding dephospho-CoA (dPCoA) and pyrophosphate. In Acidovorax ebreus (strain TPSY) (Diaphorobacter sp. (strain TPSY)), this protein is Phosphopantetheine adenylyltransferase.